We begin with the raw amino-acid sequence, 459 residues long: Ribulose bisphosphate carboxylase large chain (459 aa).

Position 4 is an N6,N6,N6-trimethyllysine (lysine 4). Residues asparagine 113 and threonine 163 each contribute to the substrate site. Lysine 165 acts as the Proton acceptor in catalysis. Lysine 167 contacts substrate. Mg(2+) is bound by residues lysine 191, aspartate 193, and glutamate 194. Residue lysine 191 is modified to N6-carboxylysine. Residue histidine 284 is the Proton acceptor of the active site. Residues arginine 285, histidine 317, and serine 369 each coordinate substrate.

The protein belongs to the RuBisCO large chain family. Type I subfamily. As to quaternary structure, heterohexadecamer of 8 large chains and 8 small chains; disulfide-linked. The disulfide link is formed within the large subunit homodimers. Mg(2+) is required as a cofactor. In terms of processing, the disulfide bond which can form in the large chain dimeric partners within the hexadecamer appears to be associated with oxidative stress and protein turnover.

It is found in the plastid. The protein resides in the chloroplast. It catalyses the reaction 2 (2R)-3-phosphoglycerate + 2 H(+) = D-ribulose 1,5-bisphosphate + CO2 + H2O. The catalysed reaction is D-ribulose 1,5-bisphosphate + O2 = 2-phosphoglycolate + (2R)-3-phosphoglycerate + 2 H(+). In terms of biological role, ruBisCO catalyzes two reactions: the carboxylation of D-ribulose 1,5-bisphosphate, the primary event in carbon dioxide fixation, as well as the oxidative fragmentation of the pentose substrate in the photorespiration process. Both reactions occur simultaneously and in competition at the same active site. The protein is Ribulose bisphosphate carboxylase large chain of Ceratopetalum gummiferum (New South Wales Christmas bush).